Consider the following 347-residue polypeptide: ATP-dependent (S)-NAD(P)H-hydrate dehydratase (347 aa).

A YjeF C-terminal domain is found at 53 to 344 (TLQLVRNIIP…AEVGAAFSKL (292 aa)). Phosphotyrosine is present on tyrosine 85. Residues glycine 153 and 206-212 (NHVEFSR) contribute to the (6S)-NADPHX site. N-linked (GlcNAc...) asparagine glycosylation occurs at asparagine 240. Residues 246–250 (KGERD) and 265–274 (GSSRRCGGQG) contribute to the ATP site. Residue aspartate 275 coordinates (6S)-NADPHX. N-linked (GlcNAc...) asparagine glycosylation is present at asparagine 297.

The protein belongs to the NnrD/CARKD family. Mg(2+) is required as a cofactor.

It localises to the mitochondrion. It carries out the reaction (6S)-NADHX + ATP = ADP + phosphate + NADH + H(+). The catalysed reaction is (6S)-NADPHX + ATP = ADP + phosphate + NADPH + H(+). Catalyzes the dehydration of the S-form of NAD(P)HX at the expense of ATP, which is converted to ADP. Together with NAD(P)HX epimerase, which catalyzes the epimerization of the S- and R-forms, the enzyme allows the repair of both epimers of NAD(P)HX, a damaged form of NAD(P)H that is a result of enzymatic or heat-dependent hydration. This chain is ATP-dependent (S)-NAD(P)H-hydrate dehydratase, found in Homo sapiens (Human).